A 94-amino-acid polypeptide reads, in one-letter code: Lipoate-protein ligase A subunit 2 (94 aa).

Heterodimer composed of LplA and LplB.

It catalyses the reaction L-lysyl-[lipoyl-carrier protein] + (R)-lipoate + ATP = N(6)-[(R)-lipoyl]-L-lysyl-[lipoyl-carrier protein] + AMP + diphosphate + H(+). It functions in the pathway protein modification; protein lipoylation via exogenous pathway; protein N(6)-(lipoyl)lysine from lipoate: step 1/2. Its pathway is protein modification; protein lipoylation via exogenous pathway; protein N(6)-(lipoyl)lysine from lipoate: step 2/2. Part of a lipoate-protein ligase complex that catalyzes both the ATP-dependent activation of exogenously supplied lipoate to lipoyl-AMP and the transfer of the activated lipoyl onto the lipoyl domains of lipoate-dependent enzymes. Can also use octanoate as substrate. This is Lipoate-protein ligase A subunit 2 (lplB) from Thermoplasma acidophilum (strain ATCC 25905 / DSM 1728 / JCM 9062 / NBRC 15155 / AMRC-C165).